A 383-amino-acid polypeptide reads, in one-letter code: Alkanesulfonate monooxygenase (383 aa).

Belongs to the SsuD family. As to quaternary structure, homotetramer.

It carries out the reaction an alkanesulfonate + FMNH2 + O2 = an aldehyde + FMN + sulfite + H2O + 2 H(+). Catalyzes the desulfonation of aliphatic sulfonates. The sequence is that of Alkanesulfonate monooxygenase from Erwinia pyrifoliae (strain DSM 12163 / CIP 106111 / Ep16/96).